The sequence spans 358 residues: Protein RecA (358 aa).

ATP is bound at residue 69-76 (GPESSGKT).

It belongs to the RecA family.

It localises to the cytoplasm. Functionally, can catalyze the hydrolysis of ATP in the presence of single-stranded DNA, the ATP-dependent uptake of single-stranded DNA by duplex DNA, and the ATP-dependent hybridization of homologous single-stranded DNAs. It interacts with LexA causing its activation and leading to its autocatalytic cleavage. The polypeptide is Protein RecA (Trichormus variabilis (strain ATCC 29413 / PCC 7937) (Anabaena variabilis)).